The chain runs to 185 residues: CASP-like protein 2C3 (185 aa).

Topologically, residues 1–13 are cytoplasmic; the sequence is MAAAARVSEVKAE. The helical transmembrane segment at 14–34 threads the bilayer; that stretch reads GLLRGACAALAAAAALLVGLS. The Extracellular segment spans residues 35–53; it reads TQTETVLLVRKKATVKDVQ. A helical transmembrane segment spans residues 54–74; the sequence is ALWVLAMAAAAAAGYHLLQLL. Over 75–104 the chain is Cytoplasmic; the sequence is KCLYLGRVGGARPCRRSSRALAWTCLLLDK. A helical transmembrane segment spans residues 105-125; it reads ACAYTTFATTVAAAQACVVAL. At 126–146 the chain is on the extracellular side; that stretch reads DGAHAVQWTKLCNIYTRFCEQ. Residues 147 to 167 traverse the membrane as a helical segment; the sequence is VAGSLVLGMLAAVGTAVLSAA. The Cytoplasmic segment spans residues 168 to 185; sequence SARNVFRHYSSLETYAAH.

The protein belongs to the Casparian strip membrane proteins (CASP) family. Homodimer and heterodimers.

Its subcellular location is the cell membrane. This Zea mays (Maize) protein is CASP-like protein 2C3.